A 379-amino-acid polypeptide reads, in one-letter code: Cytochrome b (379 aa).

A run of 4 helical transmembrane segments spans residues 33–53, 77–98, 113–133, and 178–198; these read FGSLLGACLTIQIITGLFLAM, WTIRYLHANGASLFFLCLFIHV, WNIGIMLLFSVMATAFMGYVL, and FFALHFILPFIISALTMIHLL. Heme b is bound by residues histidine 83 and histidine 97. Heme b-binding residues include histidine 182 and histidine 196. Histidine 201 provides a ligand contact to a ubiquinone. Helical transmembrane passes span 226–246, 288–308, 320–340, and 347–367; these read TKDFLGLLLLILLLMTLTLFY, LGGVVALIMSILILAIMPFLQ, LSQFLFWILVADLLTLTWIGG, and FINIGQMASILYFSLMVFIMP.

The protein belongs to the cytochrome b family. The cytochrome bc1 complex contains 11 subunits: 3 respiratory subunits (MT-CYB, CYC1 and UQCRFS1), 2 core proteins (UQCRC1 and UQCRC2) and 6 low-molecular weight proteins (UQCRH/QCR6, UQCRB/QCR7, UQCRQ/QCR8, UQCR10/QCR9, UQCR11/QCR10 and a cleavage product of UQCRFS1). This cytochrome bc1 complex then forms a dimer. Requires heme b as cofactor.

The protein resides in the mitochondrion inner membrane. Component of the ubiquinol-cytochrome c reductase complex (complex III or cytochrome b-c1 complex) that is part of the mitochondrial respiratory chain. The b-c1 complex mediates electron transfer from ubiquinol to cytochrome c. Contributes to the generation of a proton gradient across the mitochondrial membrane that is then used for ATP synthesis. The polypeptide is Cytochrome b (MT-CYB) (Lepilemur aeeclis (Sportive lemur)).